The sequence spans 922 residues: Metabotropic glutamate receptor 7 (922 aa).

Residues 1–34 (MVQLRKLLRVLTLMKFPCCVLEVLLCALAAAARG) form the signal peptide. Over 35–590 (QEMYAPHSIR…IIKLEWHSPW (556 aa)) the chain is Extracellular. C67 and C109 are disulfide-bonded. N98 carries N-linked (GlcNAc...) asparagine glycosylation. Residues S159, 180–182 (AST), Y230, and D314 each bind L-glutamate. 7 cysteine pairs are disulfide-bonded: C249-C541, C374-C390, C430-C437, C523-C542, C527-C545, C548-C560, and C563-C576. K407 contributes to the L-glutamate binding site. N-linked (GlcNAc...) asparagine glycosylation is found at N458 and N486. N-linked (GlcNAc...) asparagine glycosylation is present at N572. Residues 591 to 615 (AVIPVFLAMLGIIATIFVMATFIRY) form a helical membrane-spanning segment. At 616 to 627 (NDTPIVRASGRE) the chain is on the cytoplasmic side. The chain crosses the membrane as a helical span at residues 628–648 (LSYVLLTGIFLCYIITFLMIA). Residues 649–654 (KPDVAV) lie on the Extracellular side of the membrane. A helical membrane pass occupies residues 655–675 (CSFRRVFLGLGMCISYAALLT). The Cytoplasmic portion of the chain corresponds to 676 to 702 (KTNRIYRIFEQGKKSVTAPRLISPTSQ). The helical transmembrane segment at 703-723 (LAITSSLISVQLLGVFIWFGV) threads the bilayer. Residues 724–753 (DPPNIIIDYDEHKTMNPEQARGVLKCDITD) are Extracellular-facing. Residues 754 to 775 (LQIICSLGYSILLMVTCTVYAI) form a helical membrane-spanning segment. At 776-788 (KTRGVPENFNEAK) the chain is on the cytoplasmic side. The chain crosses the membrane as a helical span at residues 789-810 (PIGFTMYTTCIVWLAFIPIFFG). Residues 811–825 (TAQSAEKLYIQTTTL) are Extracellular-facing. Residues 826-850 (TISMNLSASVALGMLYMPKVYIIIF) traverse the membrane as a helical segment. Residues 851–922 (HPELNVQKRK…VTWYTIPPTV (72 aa)) are Cytoplasmic-facing.

Belongs to the G-protein coupled receptor 3 family. Homodimer. Interacts with PICK1.

It is found in the cell membrane. In terms of biological role, G-protein coupled receptor activated by glutamate that regulates axon outgrowth through the MAPK-cAMP-PKA signaling pathway during neuronal development. Ligand binding causes a conformation change that triggers signaling via guanine nucleotide-binding proteins (G proteins) and modulates the activity of downstream effectors, such as adenylate cyclase that it inhibits. This is Metabotropic glutamate receptor 7 (GRM7) from Pongo abelii (Sumatran orangutan).